An 883-amino-acid polypeptide reads, in one-letter code: MSTQLSPKYNPAEVEADRYQKWLDADVFKPSGDQKAKPYSIVIPPPNVTGKLHLGHAWDTTLPDIIIRQKRMQGFDTLWLPGMDHAGIATQAKVEARLAEDGISRYDLGREKFLDKVWEWKDEYAATIKEQWGKMGISVDYSRERFTLDEGLSKAVRKVFVELYKKGWIYRGEFIINWDPKARTALSDIEVIHKDVEGAFYHMNYMLEDGSRALEVATTRPETMFGDTAVAVNPNDDRYKDLIGQNVILPIVNKLIPIVADEHADPEFGTGVVKITPAHDPNDFLVGQRHNLPQVNVMNDDGTMNELAGEFAGMDRFEARKATVKKLEEIGALVEIEKMTHSVGHSERTGVPIEPRLSTQWFVKMDQLAKNAIANQDTDDKVDFYPPRFNDTFLQWMENVHDWVISRQLWWGHQIPAWYNADGDMYVGEEAPEGDGWKQDEDVLDTWFSSALWPFSTMGWPDTDSEDFKRYFPTSTLVTGYDIIFFWVSRMIFQSLEFTGCRPFQNVLIHGLIRDEQGRKMSKSLGNGIDPMDVVDKYGADALRWFLSNGSAPGQDVRFSYEKMDAAWNFINKIWNISRYILMNNEGLSLDQASKNVVLVTNGKAGNVTDRWILHNLNETIAKVTENFDKFEFGVAGHILYNFIWDEFADWYVELTKEVLYSEDEAEKVITRSVLLYTLDKILRLLHPIMPFVTEEIFGQYADGSIVTAAYPTVNPAFENQTAHSGVESLKDLIRAVRNARAEVNVAPSKPITILVKTSDSNLEDFFKANVNYIKRFTNPETLEISSAIATPELAMSAVITGAEIFLPLADLLNVEEELARLNKELAKWQKELDIVAKKLSNDRFVQNAKPEIVQKERDKQIDYQTKYDATVERIKEMEKLIK.

The 'HIGH' region motif lies at 46–56 (PNVTGKLHLGH). The short motif at 520 to 524 (KMSKS) is the 'KMSKS' region element. Position 523 (K523) interacts with ATP. A coiled-coil region spans residues 809-883 (LADLLNVEEE…RIKEMEKLIK (75 aa)).

This sequence belongs to the class-I aminoacyl-tRNA synthetase family. ValS type 1 subfamily. In terms of assembly, monomer.

Its subcellular location is the cytoplasm. The enzyme catalyses tRNA(Val) + L-valine + ATP = L-valyl-tRNA(Val) + AMP + diphosphate. Functionally, catalyzes the attachment of valine to tRNA(Val). As ValRS can inadvertently accommodate and process structurally similar amino acids such as threonine, to avoid such errors, it has a 'posttransfer' editing activity that hydrolyzes mischarged Thr-tRNA(Val) in a tRNA-dependent manner. The polypeptide is Valine--tRNA ligase (Streptococcus mutans serotype c (strain ATCC 700610 / UA159)).